A 432-amino-acid chain; its full sequence is tRNA(Ile)-lysidine synthase (432 aa).

19-24 (STGIDS) provides a ligand contact to ATP.

It belongs to the tRNA(Ile)-lysidine synthase family.

It is found in the cytoplasm. The catalysed reaction is cytidine(34) in tRNA(Ile2) + L-lysine + ATP = lysidine(34) in tRNA(Ile2) + AMP + diphosphate + H(+). Functionally, ligates lysine onto the cytidine present at position 34 of the AUA codon-specific tRNA(Ile) that contains the anticodon CAU, in an ATP-dependent manner. Cytidine is converted to lysidine, thus changing the amino acid specificity of the tRNA from methionine to isoleucine. The polypeptide is tRNA(Ile)-lysidine synthase (Staphylococcus epidermidis (strain ATCC 35984 / DSM 28319 / BCRC 17069 / CCUG 31568 / BM 3577 / RP62A)).